The chain runs to 817 residues: Probable inorganic carbon transporter subunit DabA (817 aa).

Zn(2+) is bound by residues Cys301, Asp303, His491, and Cys506. Disordered regions lie at residues 598–617 (NTSV…ERRA) and 794–817 (GWHA…GVPS).

The protein belongs to the inorganic carbon transporter (TC 9.A.2) DabA family. As to quaternary structure, forms a complex with DabB. The cofactor is Zn(2+).

It is found in the cell inner membrane. Part of an energy-coupled inorganic carbon pump. This is Probable inorganic carbon transporter subunit DabA from Salinibacter ruber (strain DSM 13855 / M31).